The primary structure comprises 118 residues: Ribosome-binding factor A (118 aa).

The protein belongs to the RbfA family. As to quaternary structure, monomer. Binds 30S ribosomal subunits, but not 50S ribosomal subunits or 70S ribosomes.

The protein localises to the cytoplasm. Functionally, one of several proteins that assist in the late maturation steps of the functional core of the 30S ribosomal subunit. Associates with free 30S ribosomal subunits (but not with 30S subunits that are part of 70S ribosomes or polysomes). Required for efficient processing of 16S rRNA. May interact with the 5'-terminal helix region of 16S rRNA. The sequence is that of Ribosome-binding factor A from Streptococcus pyogenes serotype M1.